The primary structure comprises 110 residues: Nucleoid-associated protein Tola_2216 (110 aa).

This sequence belongs to the YbaB/EbfC family. As to quaternary structure, homodimer.

The protein resides in the cytoplasm. It localises to the nucleoid. Functionally, binds to DNA and alters its conformation. May be involved in regulation of gene expression, nucleoid organization and DNA protection. This is Nucleoid-associated protein Tola_2216 from Tolumonas auensis (strain DSM 9187 / NBRC 110442 / TA 4).